Here is a 213-residue protein sequence, read N- to C-terminus: MSKTVGASRFRPAGWLQRAGYAPQVFVFRNLESGQVIYSQLPTFTERQINKNFYRPNWENRKPSTRPDIWKCMAVVDLASHEESVRLYQNLCRLRYLREVPQRKAAEQLRKRNEFGHIWYSAQYRPTYTQEAVADLRECLLRARGGATVHWEDPWRMGDRAKHWAALPAVQHQFLPRMANVAREESAILKQLGERAKRAFAAPAPPAPAPQSL.

It belongs to the mitochondrion-specific ribosomal protein mL67 family.

The protein localises to the nucleus. It is found in the mitochondrion. Its function is as follows. Transcription factor involved in regulation of RNA polymerase II-dependent transcription. Also involved in regulation of mitochondrial DNA recombination, maintenance and repair, and generation of homoplasmic cells. The chain is Large ribosomal subunit protein mL67 (MHR1) from Eremothecium gossypii (strain ATCC 10895 / CBS 109.51 / FGSC 9923 / NRRL Y-1056) (Yeast).